Reading from the N-terminus, the 119-residue chain is Large ribosomal subunit protein uL18 (119 aa).

Residues 1–10 (MKKIKEAEQR) show a composition bias toward basic and acidic residues. The interval 1 to 20 (MKKIKEAEQRKLRRKKRIKD) is disordered.

It belongs to the universal ribosomal protein uL18 family. Part of the 50S ribosomal subunit; part of the 5S rRNA/L5/L18/L25 subcomplex. Contacts the 5S and 23S rRNAs.

In terms of biological role, this is one of the proteins that bind and probably mediate the attachment of the 5S RNA into the large ribosomal subunit, where it forms part of the central protuberance. This chain is Large ribosomal subunit protein uL18, found in Borreliella burgdorferi (strain ATCC 35210 / DSM 4680 / CIP 102532 / B31) (Borrelia burgdorferi).